A 192-amino-acid polypeptide reads, in one-letter code: Adenylate kinase (192 aa).

Residue Gly-10–Thr-18 participates in ATP binding.

It belongs to the archaeal adenylate kinase family. In terms of assembly, monomer.

Its subcellular location is the cytoplasm. It carries out the reaction AMP + ATP = 2 ADP. This Methanococcus voltae protein is Adenylate kinase (adkA).